The following is a 386-amino-acid chain: D-galactosamine-6-phosphate deaminase AgaS (386 aa).

SIS domains follow at residues 59–217 (LTPI…CIEM) and 222–366 (LTER…PDNP).

It belongs to the SIS family. AgaS subfamily.

The protein resides in the cytoplasm. The enzyme catalyses D-galactosamine 6-phosphate + H2O = D-tagatopyranose 1-phosphate + NH4(+). The catalysed reaction is alpha-D-glucosamine 6-phosphate + H2O = beta-D-fructose 6-phosphate + NH4(+). Its function is as follows. Involved in the pathway of N-acetyl-D-galactosamine degradation. Catalyzes the conversion of D-galactosamine 6-phosphate (GalN-6-P) to D-tagatofuranose 6-phosphate (Tag-6-P). It can also catalyze the conversion of D-glucosamine 6-phosphate. The chain is D-galactosamine-6-phosphate deaminase AgaS from Shewanella sp. (strain ANA-3).